The chain runs to 466 residues: Histidine--tRNA ligase (466 aa).

This sequence belongs to the class-II aminoacyl-tRNA synthetase family. Homodimer.

Its subcellular location is the cytoplasm. It catalyses the reaction tRNA(His) + L-histidine + ATP = L-histidyl-tRNA(His) + AMP + diphosphate + H(+). This chain is Histidine--tRNA ligase, found in Xylella fastidiosa (strain M23).